The sequence spans 281 residues: NADPH-dependent 7-cyano-7-deazaguanine reductase (281 aa).

Substrate is bound at residue 88-90; sequence IES. 90–91 is a binding site for NADPH; that stretch reads SK. Residue Cys189 is the Thioimide intermediate of the active site. Asp196 serves as the catalytic Proton donor. 228–229 lines the substrate pocket; that stretch reads HE. Position 257 to 258 (257 to 258) interacts with NADPH; sequence RG.

This sequence belongs to the GTP cyclohydrolase I family. QueF type 2 subfamily. As to quaternary structure, homodimer.

Its subcellular location is the cytoplasm. The enzyme catalyses 7-aminomethyl-7-carbaguanine + 2 NADP(+) = 7-cyano-7-deazaguanine + 2 NADPH + 3 H(+). It functions in the pathway tRNA modification; tRNA-queuosine biosynthesis. Functionally, catalyzes the NADPH-dependent reduction of 7-cyano-7-deazaguanine (preQ0) to 7-aminomethyl-7-deazaguanine (preQ1). The protein is NADPH-dependent 7-cyano-7-deazaguanine reductase of Yersinia pestis bv. Antiqua (strain Antiqua).